Reading from the N-terminus, the 263-residue chain is 3-oxo-5-alpha-steroid 4-dehydrogenase 1 (263 aa).

5 consecutive transmembrane segments (helical) span residues 16 to 33 (MLAALAYLQCAVGCAVLA), 90 to 110 (ILLAMFLVHYGHRCLIYPFLM), 115 to 135 (PMPLLACTMAIMFCTFNGYLQ), 155 to 175 (FLIGFGLWLAGMLINIHSDHI), and 213 to 233 (YALASWSVQGAAFAFFTFCFL).

The protein belongs to the steroid 5-alpha reductase family.

Its subcellular location is the microsome membrane. It localises to the endoplasmic reticulum membrane. The enzyme catalyses a 3-oxo-5alpha-steroid + NADP(+) = a 3-oxo-Delta(4)-steroid + NADPH + H(+). The catalysed reaction is 5alpha-pregnane-3,20-dione + NADP(+) = progesterone + NADPH + H(+). It catalyses the reaction 17beta-hydroxy-5alpha-androstan-3-one + NADP(+) = testosterone + NADPH + H(+). It carries out the reaction androst-4-ene-3,17-dione + NADPH + H(+) = 5alpha-androstan-3,17-dione + NADP(+). In terms of biological role, converts testosterone into 5-alpha-dihydrotestosterone and progesterone or corticosterone into their corresponding 5-alpha-3-oxosteroids. It plays a central role in sexual differentiation and androgen physiology. The protein is 3-oxo-5-alpha-steroid 4-dehydrogenase 1 (SRD5A1) of Macaca fascicularis (Crab-eating macaque).